Reading from the N-terminus, the 159-residue chain is Putative polyketide cyclase (159 aa).

To polyketide cyclases.

Functionally, involved in developmentally regulated synthesis of a compound biosynthetically related to polyketide antibiotics which is essential for spore color in Streptomyces coelicolor. The chain is Putative polyketide cyclase from Streptomyces coelicolor (strain ATCC BAA-471 / A3(2) / M145).